The following is a 397-amino-acid chain: Multidrug resistance protein MdtH (397 aa).

The next 11 membrane-spanning stretches (helical) occupy residues 11–31 (WFLALDSLLVILGFFVVMPMI), 32–52 (SLRFVDQLGWAAGVVGLALGL), 71–91 (FGARPLIVGGMLLRAAGFASL), 94–114 (AQSGLELILSCVISGLGGCLF), 137–157 (LLMMLESAGAVVGALLGSWLL), 163–183 (YVCLLGAGLFVCAALCNLLIL), 211–231 (LVLILSGYYALWVQVMLIFPI), 242–262 (AVGWMYTLETAISLALLYPLA), 291–311 (FANTLPAVFMLLACFYLGIVI), 340–360 (LALGGMTGYVGGGALHDYAML), and 366–386 (LPWLVLGTVGVTTLLLLVNCF).

The protein belongs to the major facilitator superfamily. DHA1 family. MdtH (TC 2.A.1.2.21) subfamily.

It localises to the cell inner membrane. The polypeptide is Multidrug resistance protein MdtH (Aeromonas hydrophila subsp. hydrophila (strain ATCC 7966 / DSM 30187 / BCRC 13018 / CCUG 14551 / JCM 1027 / KCTC 2358 / NCIMB 9240 / NCTC 8049)).